The primary structure comprises 116 residues: NADH-quinone oxidoreductase subunit A (116 aa).

The next 3 membrane-spanning stretches (helical) occupy residues 3–23 (FTLL…ALGI), 61–81 (FAIL…WAVV), and 85–105 (LGVY…LGLA).

The protein belongs to the complex I subunit 3 family. As to quaternary structure, NDH-1 is composed of 14 different subunits. Subunits NuoA, H, J, K, L, M, N constitute the membrane sector of the complex.

The protein resides in the cell inner membrane. It catalyses the reaction a quinone + NADH + 5 H(+)(in) = a quinol + NAD(+) + 4 H(+)(out). Functionally, NDH-1 shuttles electrons from NADH, via FMN and iron-sulfur (Fe-S) centers, to quinones in the respiratory chain. The immediate electron acceptor for the enzyme in this species is believed to be a menaquinone. Couples the redox reaction to proton translocation (for every two electrons transferred, four hydrogen ions are translocated across the cytoplasmic membrane), and thus conserves the redox energy in a proton gradient. This Phocaeicola vulgatus (strain ATCC 8482 / DSM 1447 / JCM 5826 / CCUG 4940 / NBRC 14291 / NCTC 11154) (Bacteroides vulgatus) protein is NADH-quinone oxidoreductase subunit A.